The primary structure comprises 481 residues: MKVLVVFIFCLVRSTFGQFEVPDALVEVFRPRGLRVSIPDQEGIKLFAFHGKINEEMNGREGGTFSRDILKAKNGRWTFYDANARLKEGDILYYWTYVDYFDGKNKLGYPNDDQKFVVKQLLDKDGAAPSVTPPTVTKAPPQEHTTLESGCKASVTTKVNERVCAGEQIFHEDFTTFETNIWRPEVKFADKPDYEFVFYRAGPPNLQVKHHRLTIRPVPSDAVFGEGFVSRREKVNLAPACTGVHGSIECVQTPGAFLILPPVTSAQISTKGKWSFKYGKVEIRAKLPKGDWIYPELYLNPVNEEYGPGYASGQIRIAFSGGNEDLCRDLRGGCILGSRPAARNYAVKNIVKNSGSWSDDFHKFIVIWKPDQITMMVDDQVYGNIYPPEGGFVSEAYNLDLVNVERWRGGTSFAPFDKEMYLVLGVGVGGHCFEDRSDATKPWTNNDPKSQKKFYQAAAQWGATWSNASRLEVDYVKVSAL.

The first 17 residues, 1 to 17, serve as a signal peptide directing secretion; it reads MKVLVVFIFCLVRSTFG. One can recognise a CBM39 domain in the interval 19-123; it reads FEVPDALVEV…QKFVVKQLLD (105 aa). The GH16 domain occupies 211–481; it reads HRLTIRPVPS…EVDYVKVSAL (271 aa). Asn467 carries an N-linked (GlcNAc...) asparagine glycan.

Belongs to the insect beta-1,3-glucan binding protein family. The N-terminus is blocked. In terms of tissue distribution, hemolymph.

It is found in the secreted. Involved in the recognition of invading microorganisms. Binds specifically to beta-1,3-glucan and activates the phenoloxidase cascade. This chain is Beta-1,3-glucan-binding protein (GRP), found in Tenebrio molitor (Yellow mealworm beetle).